Here is a 320-residue protein sequence, read N- to C-terminus: uncharacterized protein (320 aa).

Interacts with VP1054, VP39 and VP80.

It localises to the virion. Its subcellular location is the host nucleus. The protein resides in the host cytoplasm. Functionally, plays a role in nucleocapsid assembly and is essential for viral replication. Distributed over the cylindrical capsid sheath of nucleocapsid. This is an uncharacterized protein from Lepidoptera (butterflies and moths).